A 576-amino-acid chain; its full sequence is Arginine--tRNA ligase (576 aa).

The short motif at Ala126–His136 is the 'HIGH' region element.

This sequence belongs to the class-I aminoacyl-tRNA synthetase family. Monomer.

It is found in the cytoplasm. The catalysed reaction is tRNA(Arg) + L-arginine + ATP = L-arginyl-tRNA(Arg) + AMP + diphosphate. This Rickettsia canadensis (strain McKiel) protein is Arginine--tRNA ligase.